The primary structure comprises 193 residues: 3-isopropylmalate dehydratase small subunit (193 aa).

Belongs to the LeuD family. LeuD type 1 subfamily. In terms of assembly, heterodimer of LeuC and LeuD.

It carries out the reaction (2R,3S)-3-isopropylmalate = (2S)-2-isopropylmalate. It participates in amino-acid biosynthesis; L-leucine biosynthesis; L-leucine from 3-methyl-2-oxobutanoate: step 2/4. Catalyzes the isomerization between 2-isopropylmalate and 3-isopropylmalate, via the formation of 2-isopropylmaleate. The sequence is that of 3-isopropylmalate dehydratase small subunit from Listeria monocytogenes serovar 1/2a (strain ATCC BAA-679 / EGD-e).